The sequence spans 474 residues: Flotillin-like protein 3 (474 aa).

Residue C35 is the site of S-palmitoyl cysteine attachment. Coiled coils occupy residues 235 to 255 and 305 to 325; these read ENQREAEVAEANSELAKKKAA and QYETKVQEANWELYKKQKEAE.

Belongs to the band 7/mec-2 family. Flotillin subfamily. Post-translationally, may be palmitoylated. As to expression, expressed in all plant organs. Primarily expressed in vascular tissues. No change in spatial expression in root upon inoculation. Expression limited to the nodule vascular tissue.

The protein resides in the cell membrane. It is found in the membrane. Its subcellular location is the caveola. Its function is as follows. May act as a scaffolding protein within caveolar membranes, functionally participating in formation of caveolae or caveolae-like vesicles. May be involved in nodule formation. This is Flotillin-like protein 3 (FLOT3) from Medicago truncatula (Barrel medic).